The chain runs to 143 residues: Transcriptional regulator MraZ (143 aa).

2 consecutive SpoVT-AbrB domains span residues 5–47 (QYEH…SLEE) and 76–119 (AVEC…SKEV).

This sequence belongs to the MraZ family. Forms oligomers.

The protein localises to the cytoplasm. Its subcellular location is the nucleoid. The chain is Transcriptional regulator MraZ from Thermoanaerobacter sp. (strain X514).